The primary structure comprises 126 residues: Small ribosomal subunit protein uS12 (126 aa).

Asp89 bears the 3-methylthioaspartic acid mark. Residues Arg99 to Lys126 are disordered. The segment covering Gly113–Lys126 has biased composition (basic residues).

It belongs to the universal ribosomal protein uS12 family. As to quaternary structure, part of the 30S ribosomal subunit. Contacts proteins S8 and S17. May interact with IF1 in the 30S initiation complex.

Its function is as follows. With S4 and S5 plays an important role in translational accuracy. Functionally, interacts with and stabilizes bases of the 16S rRNA that are involved in tRNA selection in the A site and with the mRNA backbone. Located at the interface of the 30S and 50S subunits, it traverses the body of the 30S subunit contacting proteins on the other side and probably holding the rRNA structure together. The combined cluster of proteins S8, S12 and S17 appears to hold together the shoulder and platform of the 30S subunit. The protein is Small ribosomal subunit protein uS12 of Legionella pneumophila (strain Paris).